The sequence spans 215 residues: Floral homeotic protein GLOBOSA (215 aa).

An MADS-box domain is found at 3-57; it reads RGKIEIKRIENSSNRQVTYSKRRNGIMKKAKEISVLCDAHVSVIIFASSGKMHEF. Residues 84–170 form the K-box domain; sequence HEHLDNEINR…QFKLRQMHLD (87 aa).

Its subcellular location is the nucleus. Functionally, transcription factor involved in the genetic control of flower development. Acts in conjunction with DEFICIENS (defA). This is Floral homeotic protein GLOBOSA (GLO) from Antirrhinum majus (Garden snapdragon).